A 479-amino-acid polypeptide reads, in one-letter code: MGEEETIVNDENSSKPKPSPKLTLLPLVFLIFYEVSGGPFGVEDSVKSGGGPLLALLGFLIFPLIWSIPEALVTAELATSFPENGGYVVWISSAFGPFWGFQEGFWKWFSGVMDNALYPVLFLDYLKHSFPVLDHVAARVPALLVITFSLTYLNYRGLHIVGFSAVVLAVFSLCPFVVMALLAVPNIRPKRWLFVDTQKINWRGYFNTMFWNLNYWDKASTLAGEVDRPGKTFPKALFGAVLLVMGSYLIPLMAGTGALSSSTSGEWSDGYFAEVGMLIGGVWLKGWIQAAAAMSNLGLFEAEMSSDAFQLLGMSEIGMLPAFFAQRSKYGTPTISILCSATGVIFLSWMSFQEIIEFLNFLYALGMLLEFAAFVKLRIKKPDLHRPYRVPLNTFGVSMLCLPPSLLVILVMVLAAPKTFLISGVIIVLGFCLYPFLTLVKEKQWARFIPEETRPVSGVSSESQLDEEHGDESAASLLP.

Helical transmembrane passes span 22 to 42 (LTLLPLVFLIFYEVSGGPFGV), 53 to 73 (LLALLGFLIFPLIWSIPEALV), 86 to 106 (GYVVWISSAFGPFWGFQEGFW), 130 to 150 (FPVLDHVAARVPALLVITFSL), 160 to 180 (IVGFSAVVLAVFSLCPFVVMA), 236 to 256 (ALFGAVLLVMGSYLIPLMAGT), 275 to 295 (VGMLIGGVWLKGWIQAAAAMS), 304 to 324 (MSSDAFQLLGMSEIGMLPAFF), 332 to 352 (TPTISILCSATGVIFLSWMSF), 355 to 375 (IIEFLNFLYALGMLLEFAAFV), 395 to 415 (FGVSMLCLPPSLLVILVMVLA), and 420 to 440 (FLISGVIIVLGFCLYPFLTLV). The disordered stretch occupies residues 454–479 (RPVSGVSSESQLDEEHGDESAASLLP).

The protein belongs to the amino acid-polyamine-organocation (APC) superfamily. Polyamine:cation symporter (PHS) (TC 2.A.3.12) family.

It is found in the cell membrane. Probable cell membrane polyamine/proton symporter involved in the polyamine uptake in cells. The polypeptide is Probable polyamine transporter At3g19553 (Arabidopsis thaliana (Mouse-ear cress)).